A 549-amino-acid chain; its full sequence is Arginine--tRNA ligase (549 aa).

The short motif at 132–142 is the 'HIGH' region element; sequence ANPTGPLHLAH.

The protein belongs to the class-I aminoacyl-tRNA synthetase family. As to quaternary structure, monomer.

Its subcellular location is the cytoplasm. It catalyses the reaction tRNA(Arg) + L-arginine + ATP = L-arginyl-tRNA(Arg) + AMP + diphosphate. This Renibacterium salmoninarum (strain ATCC 33209 / DSM 20767 / JCM 11484 / NBRC 15589 / NCIMB 2235) protein is Arginine--tRNA ligase.